We begin with the raw amino-acid sequence, 456 residues long: UDP-N-acetylmuramoylalanine--D-glutamate ligase (456 aa).

An ATP-binding site is contributed by Gly119 to Thr125.

This sequence belongs to the MurCDEF family.

It is found in the cytoplasm. It carries out the reaction UDP-N-acetyl-alpha-D-muramoyl-L-alanine + D-glutamate + ATP = UDP-N-acetyl-alpha-D-muramoyl-L-alanyl-D-glutamate + ADP + phosphate + H(+). It participates in cell wall biogenesis; peptidoglycan biosynthesis. Its function is as follows. Cell wall formation. Catalyzes the addition of glutamate to the nucleotide precursor UDP-N-acetylmuramoyl-L-alanine (UMA). The sequence is that of UDP-N-acetylmuramoylalanine--D-glutamate ligase (murD) from Enterococcus faecalis (strain ATCC 700802 / V583).